The sequence spans 489 residues: Zinc finger protein 58 (489 aa).

Residues 2–73 (LSFWDVAIDF…KRQAAAAVHP (72 aa)) form the KRAB domain. The C2H2-type 1; degenerate zinc finger occupies 78–100 (NKCKDFSKAFFCKSLLTQHQRIR). C2H2-type zinc fingers lie at residues 106–128 (FKCEECGKAFNNRSNLSEHKRIH), 134–156 (YKCEECGKAFRIRSKLSTHQRVH), 162–184 (YKCEECGKAFNSHSNLSEHKRIH), 190–212 (YKCEECGKAFSTRSTYYRHQKNH), 218–240 (YKCEECAKEFSYPSLLKVHQRIH), 246–268 (YKCEECGKPFYCPLLLKKHQIIH), 274–296 (YKCAECGKAFHYPSLLKRHQRIH), 302–324 (CKCKDCDRAFYSSAFLKRHQRIH), 330–352 (YKCGECGKRFCSFPHLQYHQRFH), 358–380 (YKCEQCGKTFSTLSYLPWHKLRH), 386–408 (YKCEKCGKMFYSTLDLKKHQKIH), 410–432 (YKCGECHYGFPNYAALTAHQRVH), 438–460 (HVCEQCGKDFSRIDSLNQHQLVH), and 466–488 (YKCEKCGKCFYRSSSLKRHQGIH).

This sequence belongs to the krueppel C2H2-type zinc-finger protein family. In terms of tissue distribution, expressed in liver, testis and, at considerably lower levels, in brain, spleen and heart.

It localises to the nucleus. Its function is as follows. May have a role during differentiation processes. In Mus musculus (Mouse), this protein is Zinc finger protein 58 (Zfp58).